A 502-amino-acid chain; its full sequence is Acetyl-coenzyme A carboxylase carboxyl transferase subunit beta, chloroplastic (502 aa).

The segment covering 191–202 (GSDSESSSIRTS) has biased composition (low complexity). Residues 191-212 (GSDSESSSIRTSGNDSNFNVRE) are disordered. The 272-residue stretch at 226–497 (LWVQCENCYE…NQNSSGARGS (272 aa)) folds into the CoA carboxyltransferase N-terminal domain. Zn(2+)-binding residues include Cys-230, Cys-233, Cys-249, and Cys-252. Residues 230–252 (CENCYELNYRSFFRSKMNICEQC) form a C4-type zinc finger.

The protein belongs to the AccD/PCCB family. In terms of assembly, acetyl-CoA carboxylase is a heterohexamer composed of biotin carboxyl carrier protein, biotin carboxylase and 2 subunits each of ACCase subunit alpha and ACCase plastid-coded subunit beta (accD). Zn(2+) is required as a cofactor.

It is found in the plastid. The protein localises to the chloroplast stroma. The enzyme catalyses N(6)-carboxybiotinyl-L-lysyl-[protein] + acetyl-CoA = N(6)-biotinyl-L-lysyl-[protein] + malonyl-CoA. The protein operates within lipid metabolism; malonyl-CoA biosynthesis; malonyl-CoA from acetyl-CoA: step 1/1. Its function is as follows. Component of the acetyl coenzyme A carboxylase (ACC) complex. Biotin carboxylase (BC) catalyzes the carboxylation of biotin on its carrier protein (BCCP) and then the CO(2) group is transferred by the transcarboxylase to acetyl-CoA to form malonyl-CoA. In Chloranthus spicatus (Chulantree), this protein is Acetyl-coenzyme A carboxylase carboxyl transferase subunit beta, chloroplastic.